A 531-amino-acid chain; its full sequence is L-aspartate oxidase (531 aa).

FAD-binding positions include serine 11–alanine 14, lysine 33, asparagine 40–glycine 47, threonine 151–alanine 152, and aspartate 205. Residue arginine 272 is the Proton donor/acceptor of the active site. FAD is bound by residues glutamate 353 and serine 369–leucine 370.

The protein belongs to the FAD-dependent oxidoreductase 2 family. NadB subfamily. In terms of assembly, monomer. Homodimer. It depends on FAD as a cofactor.

Its subcellular location is the cytoplasm. It carries out the reaction L-aspartate + O2 = iminosuccinate + H2O2. It catalyses the reaction fumarate + L-aspartate = iminosuccinate + succinate. The protein operates within cofactor biosynthesis; NAD(+) biosynthesis; iminoaspartate from L-aspartate (oxidase route): step 1/1. Functionally, catalyzes the oxidation of L-aspartate to iminoaspartate, the first step in the de novo biosynthesis of NAD(+). Can use either oxygen or fumarate as electron acceptors, which allows the enzyme to be functional under aerobic and anaerobic conditions. In Bacillus subtilis (strain 168), this protein is L-aspartate oxidase.